An 88-amino-acid chain; its full sequence is Large ribosomal subunit protein eL37A (88 aa).

Positions 19, 22, 34, and 37 each coordinate Zn(2+). The C4-type zinc-finger motif lies at 19–37 (CNRCGRRSFHVQKKTCSSC).

This sequence belongs to the eukaryotic ribosomal protein eL37 family. In terms of assembly, component of the large ribosomal subunit (LSU). Mature yeast ribosomes consist of a small (40S) and a large (60S) subunit. The 40S small subunit contains 1 molecule of ribosomal RNA (18S rRNA) and 33 different proteins (encoded by 57 genes). The large 60S subunit contains 3 rRNA molecules (25S, 5.8S and 5S rRNA) and 46 different proteins (encoded by 81 genes). The cofactor is Zn(2+).

It localises to the cytoplasm. Component of the ribosome, a large ribonucleoprotein complex responsible for the synthesis of proteins in the cell. The small ribosomal subunit (SSU) binds messenger RNAs (mRNAs) and translates the encoded message by selecting cognate aminoacyl-transfer RNA (tRNA) molecules. The large subunit (LSU) contains the ribosomal catalytic site termed the peptidyl transferase center (PTC), which catalyzes the formation of peptide bonds, thereby polymerizing the amino acids delivered by tRNAs into a polypeptide chain. The nascent polypeptides leave the ribosome through a tunnel in the LSU and interact with protein factors that function in enzymatic processing, targeting, and the membrane insertion of nascent chains at the exit of the ribosomal tunnel. In Saccharomyces cerevisiae (strain ATCC 204508 / S288c) (Baker's yeast), this protein is Large ribosomal subunit protein eL37A.